A 945-amino-acid polypeptide reads, in one-letter code: Bifunctional glutamine synthetase adenylyltransferase/adenylyl-removing enzyme (945 aa).

The segment at 1 to 440 (MMPLSPQLQQ…VFNELIGDDE (440 aa)) is adenylyl removase. The tract at residues 449 to 945 (AEYWRELWQD…SASWQKWLMA (497 aa)) is adenylyl transferase.

Belongs to the GlnE family. The cofactor is Mg(2+).

It catalyses the reaction [glutamine synthetase]-O(4)-(5'-adenylyl)-L-tyrosine + phosphate = [glutamine synthetase]-L-tyrosine + ADP. The catalysed reaction is [glutamine synthetase]-L-tyrosine + ATP = [glutamine synthetase]-O(4)-(5'-adenylyl)-L-tyrosine + diphosphate. Involved in the regulation of glutamine synthetase GlnA, a key enzyme in the process to assimilate ammonia. When cellular nitrogen levels are high, the C-terminal adenylyl transferase (AT) inactivates GlnA by covalent transfer of an adenylyl group from ATP to specific tyrosine residue of GlnA, thus reducing its activity. Conversely, when nitrogen levels are low, the N-terminal adenylyl removase (AR) activates GlnA by removing the adenylyl group by phosphorolysis, increasing its activity. The regulatory region of GlnE binds the signal transduction protein PII (GlnB) which indicates the nitrogen status of the cell. The polypeptide is Bifunctional glutamine synthetase adenylyltransferase/adenylyl-removing enzyme (Klebsiella pneumoniae subsp. pneumoniae (strain ATCC 700721 / MGH 78578)).